A 414-amino-acid polypeptide reads, in one-letter code: Peptide chain release factor subunit 1 (414 aa).

It belongs to the eukaryotic release factor 1 family. As to quaternary structure, heterodimer of two subunits, one of which binds GTP.

The protein localises to the cytoplasm. Its function is as follows. Directs the termination of nascent peptide synthesis (translation) in response to the termination codons UAA, UAG and UGA. The sequence is that of Peptide chain release factor subunit 1 from Methanococcoides burtonii (strain DSM 6242 / NBRC 107633 / OCM 468 / ACE-M).